We begin with the raw amino-acid sequence, 543 residues long: Putative fatty acyl-CoA reductase CG8303 (543 aa).

The interval M1–N29 is disordered. Polar residues predominate over residues G8 to G22. 3 helical membrane passes run L386–F406, V500–L520, and L522–W542.

Belongs to the fatty acyl-CoA reductase family.

It localises to the membrane. The catalysed reaction is a long-chain fatty acyl-CoA + 2 NADPH + 2 H(+) = a long-chain primary fatty alcohol + 2 NADP(+) + CoA. It carries out the reaction hexadecanoyl-CoA + 2 NADPH + 2 H(+) = hexadecan-1-ol + 2 NADP(+) + CoA. The enzyme catalyses octadecanoyl-CoA + 2 NADPH + 2 H(+) = octadecan-1-ol + 2 NADP(+) + CoA. Functionally, catalyzes the reduction of C16 or C18 fatty acyl-CoA to fatty alcohols. The sequence is that of Putative fatty acyl-CoA reductase CG8303 from Drosophila melanogaster (Fruit fly).